Reading from the N-terminus, the 457-residue chain is Siroheme synthase (457 aa).

The segment at M1–T204 is precorrin-2 dehydrogenase /sirohydrochlorin ferrochelatase. Residues D22 to V23 and L43 to A44 contribute to the NAD(+) site. S128 is subject to Phosphoserine. Positions G216 to H457 are uroporphyrinogen-III C-methyltransferase. P225 contributes to the S-adenosyl-L-methionine binding site. The active-site Proton acceptor is the D248. The active-site Proton donor is K270. Residues G301–D303, I306, T331–A332, M382, and G411 each bind S-adenosyl-L-methionine.

This sequence in the N-terminal section; belongs to the precorrin-2 dehydrogenase / sirohydrochlorin ferrochelatase family. In the C-terminal section; belongs to the precorrin methyltransferase family.

The enzyme catalyses uroporphyrinogen III + 2 S-adenosyl-L-methionine = precorrin-2 + 2 S-adenosyl-L-homocysteine + H(+). It carries out the reaction precorrin-2 + NAD(+) = sirohydrochlorin + NADH + 2 H(+). The catalysed reaction is siroheme + 2 H(+) = sirohydrochlorin + Fe(2+). Its pathway is cofactor biosynthesis; adenosylcobalamin biosynthesis; precorrin-2 from uroporphyrinogen III: step 1/1. It participates in cofactor biosynthesis; adenosylcobalamin biosynthesis; sirohydrochlorin from precorrin-2: step 1/1. It functions in the pathway porphyrin-containing compound metabolism; siroheme biosynthesis; precorrin-2 from uroporphyrinogen III: step 1/1. The protein operates within porphyrin-containing compound metabolism; siroheme biosynthesis; siroheme from sirohydrochlorin: step 1/1. Its pathway is porphyrin-containing compound metabolism; siroheme biosynthesis; sirohydrochlorin from precorrin-2: step 1/1. Functionally, multifunctional enzyme that catalyzes the SAM-dependent methylations of uroporphyrinogen III at position C-2 and C-7 to form precorrin-2 via precorrin-1. Then it catalyzes the NAD-dependent ring dehydrogenation of precorrin-2 to yield sirohydrochlorin. Finally, it catalyzes the ferrochelation of sirohydrochlorin to yield siroheme. This chain is Siroheme synthase, found in Escherichia coli O45:K1 (strain S88 / ExPEC).